Consider the following 336-residue polypeptide: Biotin synthase (336 aa).

The region spanning 54–281 is the Radical SAM core domain; sequence NAIQLSTLLS…KAMVRLSAGR (228 aa). [4Fe-4S] cluster contacts are provided by cysteine 69, cysteine 73, and cysteine 76. [2Fe-2S] cluster contacts are provided by cysteine 113, cysteine 144, cysteine 204, and arginine 276.

This sequence belongs to the radical SAM superfamily. Biotin synthase family. As to quaternary structure, homodimer. Requires [4Fe-4S] cluster as cofactor. The cofactor is [2Fe-2S] cluster.

The catalysed reaction is (4R,5S)-dethiobiotin + (sulfur carrier)-SH + 2 reduced [2Fe-2S]-[ferredoxin] + 2 S-adenosyl-L-methionine = (sulfur carrier)-H + biotin + 2 5'-deoxyadenosine + 2 L-methionine + 2 oxidized [2Fe-2S]-[ferredoxin]. Its pathway is cofactor biosynthesis; biotin biosynthesis; biotin from 7,8-diaminononanoate: step 2/2. Functionally, catalyzes the conversion of dethiobiotin (DTB) to biotin by the insertion of a sulfur atom into dethiobiotin via a radical-based mechanism. The polypeptide is Biotin synthase (Burkholderia pseudomallei (strain 1710b)).